Reading from the N-terminus, the 251-residue chain is Putative F-box protein PP2-B12 (251 aa).

The 46-residue stretch at 1-46 folds into the F-box domain; it reads MNFLDLPEECIATMISFTSPFDACRISAVSKLLRSAADSNTTWERF.

The chain is Putative F-box protein PP2-B12 (PP2B12) from Arabidopsis thaliana (Mouse-ear cress).